We begin with the raw amino-acid sequence, 292 residues long: Inositol monophosphatase 2 (292 aa).

Mg(2+)-binding residues include Glu75, Asp94, Ile96, Asp97, and Asp231. Glu75 contacts substrate. Substrate-binding positions include 96 to 99 (IDGT) and Asp231.

It belongs to the inositol monophosphatase superfamily. It depends on Mg(2+) as a cofactor.

The enzyme catalyses a myo-inositol phosphate + H2O = myo-inositol + phosphate. The protein operates within polyol metabolism; myo-inositol biosynthesis; myo-inositol from D-glucose 6-phosphate: step 2/2. With respect to regulation, inhibited by Li(+) and Na(+). Responsible for the provision of inositol required for synthesis of phosphatidylinositol and polyphosphoinositides and involved in the inositol cycle of calcium signaling. The chain is Inositol monophosphatase 2 (INM2) from Saccharomyces cerevisiae (strain ATCC 204508 / S288c) (Baker's yeast).